The chain runs to 437 residues: Glutamyl-tRNA reductase (437 aa).

Substrate contacts are provided by residues 49 to 52, Ser-109, 114 to 116, and Gln-120; these read TCNR and EVQ. Cys-50 acts as the Nucleophile in catalysis. 189 to 194 is an NADP(+) binding site; it reads GAGDTA.

It belongs to the glutamyl-tRNA reductase family. As to quaternary structure, homodimer.

The catalysed reaction is (S)-4-amino-5-oxopentanoate + tRNA(Glu) + NADP(+) = L-glutamyl-tRNA(Glu) + NADPH + H(+). Its pathway is porphyrin-containing compound metabolism; protoporphyrin-IX biosynthesis; 5-aminolevulinate from L-glutamyl-tRNA(Glu): step 1/2. The protein operates within porphyrin-containing compound metabolism; chlorophyll biosynthesis. Catalyzes the NADPH-dependent reduction of glutamyl-tRNA(Glu) to glutamate 1-semialdehyde (GSA). This is Glutamyl-tRNA reductase from Chloroherpeton thalassium (strain ATCC 35110 / GB-78).